The sequence spans 637 residues: Phosphomethylpyrimidine synthase (637 aa).

Substrate-binding positions include asparagine 242, methionine 271, tyrosine 300, histidine 336, 356-358, 397-400, and glutamate 436; these read SRG and DGLR. Histidine 440 is a binding site for Zn(2+). Tyrosine 463 is a substrate binding site. Histidine 504 contacts Zn(2+). Positions 584, 587, and 592 each coordinate [4Fe-4S] cluster.

It belongs to the ThiC family. In terms of assembly, homodimer. It depends on [4Fe-4S] cluster as a cofactor.

It catalyses the reaction 5-amino-1-(5-phospho-beta-D-ribosyl)imidazole + S-adenosyl-L-methionine = 4-amino-2-methyl-5-(phosphooxymethyl)pyrimidine + CO + 5'-deoxyadenosine + formate + L-methionine + 3 H(+). The protein operates within cofactor biosynthesis; thiamine diphosphate biosynthesis. Catalyzes the synthesis of the hydroxymethylpyrimidine phosphate (HMP-P) moiety of thiamine from aminoimidazole ribotide (AIR) in a radical S-adenosyl-L-methionine (SAM)-dependent reaction. The protein is Phosphomethylpyrimidine synthase of Janthinobacterium sp. (strain Marseille) (Minibacterium massiliensis).